A 606-amino-acid polypeptide reads, in one-letter code: NADH-ubiquinone oxidoreductase chain 5 (606 aa).

A run of 16 helical transmembrane segments spans residues 1–21 (MNIFPSLMLTSLFTLTLPIIA), 38–58 (NIISFAFIISLIPTMMFIYSG), 87–107 (MIFVPVALFVTWSIMEFSIWY), 114–134 (ITQFFKYLLMFLITMMILVTA), 140–160 (LFIGWEGVGIMSFLLIGWWYG), 171–191 (AILYNRIGDIGFIMSMAWFLS), 213–233 (LMGLLLAATGKSAQFGLHPWL), 241–261 (TPVSALLHSSTMVVAGVFLLI), 273–293 (AQTLTLCLGAITTLFTAICAL), 301–320 (IIAFSTSSQLGLMIVTIGIN), 325–347 (AFLHICTHAFFKAMLFMCSGSII), 366–386 (MPFTATSLIIGSFALTGMPFL), 409–429 (LLMTLIATSLTAAYSTRMIFF), 457–477 (LLIGSIFAGFFISNNIYPTTT), 488–508 (LMALIVTILGFALALELSLAT), and 582–602 (GLIKLYFLSFLITLTLSLLLL).

Belongs to the complex I subunit 5 family. As to quaternary structure, core subunit of respiratory chain NADH dehydrogenase (Complex I) which is composed of 45 different subunits.

It is found in the mitochondrion inner membrane. It catalyses the reaction a ubiquinone + NADH + 5 H(+)(in) = a ubiquinol + NAD(+) + 4 H(+)(out). In terms of biological role, core subunit of the mitochondrial membrane respiratory chain NADH dehydrogenase (Complex I) which catalyzes electron transfer from NADH through the respiratory chain, using ubiquinone as an electron acceptor. Essential for the catalytic activity and assembly of complex I. This chain is NADH-ubiquinone oxidoreductase chain 5 (MT-ND5), found in Rhinoceros unicornis (Greater Indian rhinoceros).